The following is a 478-amino-acid chain: Alcohol dehydrogenase (quinone), cytochrome c subunit (478 aa).

The first 36 residues, 1–36 (MLNALTRDRLVSEMKQGWKLAAAIGLMAVSFGAAHA), serve as a signal peptide directing secretion. Q37 is modified (pyrrolidone carboxylic acid). Cytochrome c domains are found at residues 42–145 (ALIK…MHGV), 189–304 (PEVA…KSMP), and 327–417 (GQGN…RKGW). Heme c-binding residues include C56, C59, H60, C204, C207, H208, C340, C343, and H344.

In terms of assembly, the alcohol dehydrogenase multicomponent enzyme system is composed of a dehydrogenase subunit I (AdhA), a cytochrome c subunit II (AdhB) and a subunit III (AdhS). It depends on heme c as a cofactor.

Its subcellular location is the cell membrane. It catalyses the reaction ethanol + a ubiquinone = a ubiquinol + acetaldehyde. With respect to regulation, 2,6-dichloro-4-dicyanovinylphenol (PC16) and antimycin A inhibit ubiquinol oxidation activity more selectively than the ubiquinone reductase activity. Functionally, cytochrome c component of the alcohol dehydrogenase multicomponent enzyme system which is involved in the production of acetic acid and in the ethanol oxidase respiratory chain. Quinohemoprotein alcohol dehydrogenase (ADH) catalyzes the oxidation of ethanol to acetaldehyde by transferring electrons to the ubiquinone embedded in the membrane phospholipids. The electrons transfer from ethanol to membranous ubiquinone occurs from pyrroloquinoline quinone (PQQ) to one heme c in subunit I (AdhA), and finally to two heme c in subunit II (AdhB). Besides ubiquinone reduction, ADH also has a ubiquinol (QH2) oxidation reaction which mediates electron transfer from ubiquinol to the non-energy generating bypass oxidase system. The electrons transfer occurs from ubiquinol (QH2) to the additional heme c within subunit II (AdhB). Also able to use quinone analogs such as 2,3-dimethoxy-5-methyl-6-n-decyl-1,4-benzoquinone (DB) and 2,3-dimethoxy-5-methyl-6-n-pentyl-1,4-benzoquinone (PB). The protein is Alcohol dehydrogenase (quinone), cytochrome c subunit of Gluconobacter oxydans (strain 621H) (Gluconobacter suboxydans).